A 573-amino-acid polypeptide reads, in one-letter code: Developmental and secondary metabolism regulator VEL1 (573 aa).

A Velvet domain is found at 26–220; it reads NRHLWYQLTV…ADQGCRVRIR (195 aa). Residues 40-45 carry the Nuclear localization signal motif; sequence ERARAC. The segment at 222–520 is disordered; that stretch reads DVRMRKRDGK…STGGKRKHDH (299 aa). The segment covering 230–245 has biased composition (basic and acidic residues); it reads GKGSGFDRRGEEEYSR. Pro residues-rich tracts occupy residues 291 to 310 and 341 to 351; these read APPP…PPAA and APIPPATPTGP. Low complexity predominate over residues 352–363; it reads YPTSSAAPSPYA. Pro residues predominate over residues 379–389; it reads PPAPSASPAPP. The segment covering 432–448 has biased composition (polar residues); that stretch reads TPASQPTYSTPASQPTY. A compositionally biased stretch (pro residues) spans 458 to 475; that stretch reads SAPPPAPYSAPAPPPPRP. Positions 476–504 are PEST; it reads SMSQSSLAPLKIASLVSPLPPIEAQTEPL.

It belongs to the velvet family. VeA subfamily. In terms of assembly, component of the heterotrimeric velvet complex composed of LAE1, VEL1 and VEL2; VEL1 acting as a bridging protein between LAE1 and VEL2. Interacts with LAE1.

Its subcellular location is the nucleus. The protein localises to the cytoplasm. In terms of biological role, component of the velvet transcription factor complex that controls sexual/asexual developmental ratio in response to light, promoting sexual development in the darkness while stimulating asexual sporulation under illumination. The velvet complex hat acts as a global regulator for secondary metabolite gene expression. Regulates expression of the carbohydrate-active enzyme gene clusters. The protein is Developmental and secondary metabolism regulator VEL1 of Hypocrea jecorina (strain QM6a) (Trichoderma reesei).